The primary structure comprises 330 residues: NmrA-like family domain-containing oxidoreductase notO (330 aa).

NADP(+)-binding positions include 12–17 (VGIGSL), 38–42 (HHFAQ), 59–60 (RS), 80–82 (IEA), and 160–163 (LGGG). A helical membrane pass occupies residues 12-32 (VGIGSLPAGLVALFMGATSGI). An interaction with ASS1 region spans residues 158 to 202 (SVLGGGLESPLNEQDLDLRDPKNWTFWSSSMHSGTMGTLTLERIA). 2 N-linked (GlcNAc...) asparagine glycosylation sites follow: N180 and N207.

This sequence belongs to the NmrA-type oxidoreductase family.

It localises to the membrane. Its function is as follows. NmrA-like family domain-containing oxidoreductase; part of the gene cluster that mediates the biosynthesis of notoamide, a fungal indole alkaloid that belongs to a family of natural products containing a characteristic bicyclo[2.2.2]diazaoctane core. The first step of notoamide biosynthesis involves coupling of L-proline and L-tryptophan by the bimodular NRPS notE, to produce cyclo-L-tryptophan-L-proline called brevianamide F. The reverse prenyltransferase notF then acts as a deoxybrevianamide E synthase and converts brevianamide F to deoxybrevianamide E via reverse prenylation at C-2 of the indole ring leading to the bicyclo[2.2.2]diazaoctane core. Deoxybrevianamide E is further hydroxylated at C-6 of the indole ring, likely catalyzed by the cytochrome P450 monooxygenase notG, to yield 6-hydroxy-deoxybrevianamide E. 6-hydroxy-deoxybrevianamide E is a specific substrate of the prenyltransferase notC for normal prenylation at C-7 to produce 6-hydroxy-7-prenyl-deoxybrevianamide, also called notoamide S. As the proposed pivotal branching point in notoamide biosynthesis, notoamide S can be diverted to notoamide E through an oxidative pyran ring closure putatively catalyzed by either notH cytochrome P450 monooxygenase or the notD FAD-linked oxidoreductase. This step would be followed by an indole 2,3-epoxidation-initiated pinacol-like rearrangement catalyzed by the notB FAD-dependent monooxygenase leading to the formation of notoamide C and notoamide D. On the other hand notoamide S is converted to notoamide T by notH (or notD), a bifunctional oxidase that also functions as the intramolecular Diels-Alderase responsible for generation of (+)-notoamide T. To generate antipodal (-)-notoaminide T, notH' (or notD') in Aspergillus versicolor is expected to catalyze a Diels-Alder reaction leading to the opposite stereochemistry. The remaining oxidoreductase notD (or notH) likely catalyzes the oxidative pyran ring formation to yield (+)-stephacidin A. The FAD-dependent monooxygenase notI is highly similar to notB and is predicted to catalyze a similar conversion from (+)-stephacidin A to (-)-notoamide B via the 2,3-epoxidation of (+)-stephacidin A followed by a pinacol-type rearrangement. Finally, it remains unclear which enzyme could be responsible for the final hydroxylation steps leading to notoamide A and sclerotiamide. The function of notO in the notoamide biosynthesis has not been determined yet. The protein is NmrA-like family domain-containing oxidoreductase notO of Aspergillus sp. (strain MF297-2).